A 48-amino-acid polypeptide reads, in one-letter code: Palustrin-3b (48 aa).

An intrachain disulfide couples cysteine 43 to cysteine 48.

In terms of tissue distribution, expressed by the skin glands.

It is found in the secreted. In terms of biological role, antimicrobial activity against Gram-negative bacterium E.coli. In Lithobates palustris (Pickerel frog), this protein is Palustrin-3b.